The sequence spans 214 residues: Holliday junction branch migration complex subunit RuvA (214 aa).

Positions 1-63 (MIASLSGTVE…EDALTLYGFA (63 aa)) are domain I. The segment at 64 to 142 (DRDEREVFEV…PTGEPVPGAE (79 aa)) is domain II. A flexible linker region spans residues 143 to 151 (AEASDEPAV). A domain III region spans residues 151 to 214 (VETVWHADVV…GMAGAVRGGR (64 aa)).

The protein belongs to the RuvA family. As to quaternary structure, homotetramer. Forms an RuvA(8)-RuvB(12)-Holliday junction (HJ) complex. HJ DNA is sandwiched between 2 RuvA tetramers; dsDNA enters through RuvA and exits via RuvB. An RuvB hexamer assembles on each DNA strand where it exits the tetramer. Each RuvB hexamer is contacted by two RuvA subunits (via domain III) on 2 adjacent RuvB subunits; this complex drives branch migration. In the full resolvosome a probable DNA-RuvA(4)-RuvB(12)-RuvC(2) complex forms which resolves the HJ.

Its subcellular location is the cytoplasm. The RuvA-RuvB-RuvC complex processes Holliday junction (HJ) DNA during genetic recombination and DNA repair, while the RuvA-RuvB complex plays an important role in the rescue of blocked DNA replication forks via replication fork reversal (RFR). RuvA specifically binds to HJ cruciform DNA, conferring on it an open structure. The RuvB hexamer acts as an ATP-dependent pump, pulling dsDNA into and through the RuvAB complex. HJ branch migration allows RuvC to scan DNA until it finds its consensus sequence, where it cleaves and resolves the cruciform DNA. This is Holliday junction branch migration complex subunit RuvA from Micrococcus luteus (strain ATCC 4698 / DSM 20030 / JCM 1464 / CCM 169 / CCUG 5858 / IAM 1056 / NBRC 3333 / NCIMB 9278 / NCTC 2665 / VKM Ac-2230) (Micrococcus lysodeikticus).